Consider the following 198-residue polypeptide: MNLIPTVIEQTNRGERAYDIYSRLLKDRIIMLGSAIDDNVANSIVSQLLFLEAEDPEKDISIYINSPGGSITAGMAIYDTMQFIKPQVSTICTGMAASMGAFLLAAGEKGKRYALPNSEVMIHQPLGGAQGQATEIEIAAKRILSLRDKLNKILAERTGQPLEVIERDTDRDNFKTAEEAKEYGLIDKVLTRNIDAQK.

S98 (nucleophile) is an active-site residue. H123 is an active-site residue.

Belongs to the peptidase S14 family. Fourteen ClpP subunits assemble into 2 heptameric rings which stack back to back to give a disk-like structure with a central cavity, resembling the structure of eukaryotic proteasomes.

It localises to the cytoplasm. The catalysed reaction is Hydrolysis of proteins to small peptides in the presence of ATP and magnesium. alpha-casein is the usual test substrate. In the absence of ATP, only oligopeptides shorter than five residues are hydrolyzed (such as succinyl-Leu-Tyr-|-NHMec, and Leu-Tyr-Leu-|-Tyr-Trp, in which cleavage of the -Tyr-|-Leu- and -Tyr-|-Trp bonds also occurs).. Functionally, cleaves peptides in various proteins in a process that requires ATP hydrolysis. Has a chymotrypsin-like activity. Plays a major role in the degradation of misfolded proteins. ClpXP1 is involved in the complete degradation of the Site-2 clipped anti-sigma-W factor RsiW. This results in the release of SigW and the transcription activation of the genes under the control of the sigma-W factor. The protein is ATP-dependent Clp protease proteolytic subunit 1 of Bacillus licheniformis (strain ATCC 14580 / DSM 13 / JCM 2505 / CCUG 7422 / NBRC 12200 / NCIMB 9375 / NCTC 10341 / NRRL NRS-1264 / Gibson 46).